The following is a 599-amino-acid chain: Potassium-transporting ATPase potassium-binding subunit (599 aa).

Helical transmembrane passes span 8-28 (LLAL…IWLA), 61-81 (WQYA…VYAL), 133-153 (ALAV…FALF), 176-196 (AWLL…NGVI), 280-300 (LTNF…CFAF), 311-331 (WAVL…ITPA), 366-386 (INAS…AVIA), 391-411 (FTPL…VVFG), 416-436 (GLYG…LMIG), 456-476 (IAIL…VLAG), 521-541 (LLGL…LAIA), and 563-583 (LFVL…YVPA).

The protein belongs to the KdpA family. The system is composed of three essential subunits: KdpA, KdpB and KdpC.

The protein resides in the cell inner membrane. Functionally, part of the high-affinity ATP-driven potassium transport (or Kdp) system, which catalyzes the hydrolysis of ATP coupled with the electrogenic transport of potassium into the cytoplasm. This subunit binds the periplasmic potassium ions and delivers the ions to the membrane domain of KdpB through an intramembrane tunnel. The sequence is that of Potassium-transporting ATPase potassium-binding subunit from Polaromonas naphthalenivorans (strain CJ2).